We begin with the raw amino-acid sequence, 409 residues long: Carbamoyl phosphate synthase arginine-specific small chain (409 aa).

The region spanning 197-389 (NVALIDCGVK…FDNMSQYRAL (193 aa)) is the Glutamine amidotransferase type-1 domain. Cysteine 277 acts as the Nucleophile in catalysis. Residues histidine 362 and glutamate 364 contribute to the active site.

The protein belongs to the CarA family. As to quaternary structure, heterodimer composed of 2 chains; the small (or glutamine) chain promotes the hydrolysis of glutamine to ammonia, which is used by the large (or ammonia) chain to synthesize carbamoyl phosphate.

It localises to the cytoplasm. It carries out the reaction hydrogencarbonate + L-glutamine + 2 ATP + H2O = carbamoyl phosphate + L-glutamate + 2 ADP + phosphate + 2 H(+). The enzyme catalyses L-glutamine + H2O = L-glutamate + NH4(+). The protein operates within amino-acid biosynthesis; L-arginine biosynthesis; carbamoyl phosphate from bicarbonate: step 1/1. Functionally, small subunit of the arginine-specific carbamoyl phosphate synthase (CPSase). CPSase catalyzes the formation of carbamoyl phosphate from the ammonia moiety of glutamine, carbonate, and phosphate donated by ATP, constituting the first step of 2 biosynthetic pathways, one leading to arginine and/or urea and the other to pyrimidine nucleotides. The small subunit (glutamine amidotransferase) binds and cleaves glutamine to supply the large subunit with the substrate ammonia. This is Carbamoyl phosphate synthase arginine-specific small chain (CPA1) from Kluyveromyces lactis (strain ATCC 8585 / CBS 2359 / DSM 70799 / NBRC 1267 / NRRL Y-1140 / WM37) (Yeast).